Reading from the N-terminus, the 168-residue chain is Cytochrome c-type biogenesis protein CcmE (168 aa).

The Cytoplasmic portion of the chain corresponds to 1 to 7 (MTRKKRR). Residues 8 to 28 (LYMLGLALLGLGTATALTLSA) form a helical; Signal-anchor for type II membrane protein membrane-spanning segment. Residues 29–168 (FEENIVFFYS…KVHATTTLKP (140 aa)) are Periplasmic-facing. Heme is bound by residues His122 and Tyr126. The tract at residues 149 to 168 (SIYTPADSDDKVHATTTLKP) is disordered.

The protein belongs to the CcmE/CycJ family.

It localises to the cell inner membrane. Heme chaperone required for the biogenesis of c-type cytochromes. Transiently binds heme delivered by CcmC and transfers the heme to apo-cytochromes in a process facilitated by CcmF and CcmH. In Rhodospirillum centenum (strain ATCC 51521 / SW), this protein is Cytochrome c-type biogenesis protein CcmE.